Here is a 304-residue protein sequence, read N- to C-terminus: Hairy/enhancer-of-split related with YRPW motif protein 1 (304 aa).

The segment at 1–52 is disordered; sequence MKRAHPEYSSSESELDETIEVEKESADENGNLSSALGSMSPTTSSQILARKR. Polar residues predominate over residues 28-47; the sequence is ENGNLSSALGSMSPTTSSQI. Positions 48–117 are transcriptional repression and interaction with NCOR1 and SIN3A; that stretch reads LARKRRRGII…GGKGYFDAHA (70 aa). The 56-residue stretch at 49-104 folds into the bHLH domain; that stretch reads ARKRRRGIIEKRRRDRINNSLSELRRLVPSAFEKQGSAKLEKAEILQMTVDHLKML. The region spanning 122 to 158 is the Orange domain; that stretch reads YRSLGFRECLAEVARYLSIIEGLDASDPLRVRLVSHL. Residues 197–211 are compositionally biased toward polar residues; that stretch reads SQSTHGNTGTSASPT. The segment at 197–234 is disordered; it reads SQSTHGNTGTSASPTESHHQGRLATAHPEASALRAPPS. Residues 294–297 carry the YRPW motif motif; the sequence is YRPW.

It belongs to the HEY family. Self-associates. Interacts with HES1 and HEYL. Interacts with HDAC1, NCOR1 and SIN3A. Interacts with GATA4 and GATA6. Interacts with CCDC89/BOIP.

The protein localises to the nucleus. Transcriptional repressor which binds preferentially to the canonical E box sequence 5'-CACGTG-3'. Downstream effector of Notch signaling required for cardiovascular development. Specifically required for the Notch-induced endocardial epithelial to mesenchymal transition, which is itself criticial for cardiac valve and septum development. May be required in conjunction with HEY2 to specify arterial cell fate or identity. Promotes maintenance of neuronal precursor cells and glial versus neuronal fate specification. Represses transcription by the cardiac transcriptional activators GATA4 and GATA6 and by the neuronal bHLH factors ASCL1/MASH1 and NEUROD4/MATH3. The chain is Hairy/enhancer-of-split related with YRPW motif protein 1 (HEY1) from Bos taurus (Bovine).